A 292-amino-acid polypeptide reads, in one-letter code: Ribosomal protein L11 methyltransferase (292 aa).

Threonine 144, glycine 165, aspartate 187, and asparagine 229 together coordinate S-adenosyl-L-methionine.

Belongs to the methyltransferase superfamily. PrmA family.

The protein localises to the cytoplasm. It carries out the reaction L-lysyl-[protein] + 3 S-adenosyl-L-methionine = N(6),N(6),N(6)-trimethyl-L-lysyl-[protein] + 3 S-adenosyl-L-homocysteine + 3 H(+). In terms of biological role, methylates ribosomal protein L11. The polypeptide is Ribosomal protein L11 methyltransferase (Azotobacter vinelandii (strain DJ / ATCC BAA-1303)).